The following is a 354-amino-acid chain: MCGRTSCHLPRDVLTRACAYQDRRGQQRLPEWRDPDKYCPSYNKSPQSNSPVLLSRLHFVKDADSSERIIAPMRWGLVPSWFKESDPSKLQFNTTNCRNDTIMEKRSFKVPLGKGRRCVVLADGFYEWQRCQGTNQRQPYFIYFPQIKTEKSGSIGAADSPENWGKVWDNWRLLTMAGIFDCWEPPEGGDVLYSYTIITVDSCKGLSDIHHRMPAILDGEEAVSKWLDFGKVSTQEALKLIHPTENITFHAVSSVVNNSRNNTPECLAPVDLVVRKELKASGSSQRMLQWLATKSPKKEDSKTPQKEESDVPQWSSQFLQKSPLPTKRGTAGLLEQWLKREKEEEPVAKRPYSQ.

The active-site Nucleophile is the cysteine 2. Cysteine 2 carries the post-translational modification Thiazolidine linkage to a ring-opened DNA abasic site. Glutamate 127 is a catalytic residue. Glycyl lysine isopeptide (Lys-Gly) (interchain with G-Cter in SUMO2) cross-links involve residues lysine 148 and lysine 151. At serine 160 the chain carries Phosphoserine. Residue lysine 276 forms a Glycyl lysine isopeptide (Lys-Gly) (interchain with G-Cter in SUMO2) linkage. Residues 292–354 (ATKSPKKEDS…EPVAKRPYSQ (63 aa)) form a disordered region. Serine 295 bears the Phosphoserine mark. Over residues 296 to 309 (PKKEDSKTPQKEES) the composition is skewed to basic and acidic residues. Lysine 306 is covalently cross-linked (Glycyl lysine isopeptide (Lys-Gly) (interchain with G-Cter in SUMO2)). A Phosphoserine modification is found at serine 322. The PIP-box signature appears at 332-338 (GLLEQWL). Residues 337-348 (WLKREKEEEPVA) show a composition bias toward basic and acidic residues. Residues lysine 339 and lysine 342 each participate in a glycyl lysine isopeptide (Lys-Gly) (interchain with G-Cter in SUMO2) cross-link.

It belongs to the SOS response-associated peptidase family. In terms of assembly, interacts (via PIP-box motif) with PCNA. Ubiquitinated; the covalent HMCES DNA-protein cross-link is ubiquitinated, leading to its degradation by the proteasome.

The protein resides in the chromosome. With respect to regulation, formation and reversal of DNA-protein cross-link depends on DNA context. Catalyzes formation of the thiazolidine linkage in presence of abasic sites in single-stranded DNA. Mediates the reversal of the thiazolidine cross-link in presence of double stranded DNA. Its function is as follows. Sensor of abasic sites in single-stranded DNA (ssDNA) required to preserve genome integrity by promoting error-free repair of abasic sites. Acts as an enzyme that recognizes and binds abasic sites in ssDNA at replication forks and chemically modifies the lesion by forming a covalent cross-link with DNA: forms a stable thiazolidine linkage between a ring-opened abasic site and the alpha-amino and sulfhydryl substituents of its N-terminal catalytic cysteine residue. Promotes error-free repair by protecting abasic sites from translesion synthesis (TLS) polymerases and endonucleases that are error-prone and would generate mutations and double-strand breaks. The HMCES DNA-protein cross-link is then either reversed or degraded. HMCES is able to catalyze the reversal of its thiazolidine cross-link and cycle between a cross-link and a non-cross-linked state depending on DNA context: mediates self-reversal of the thiazolidine cross-link in double stranded DNA, allowing APEX1 to initiate downstream repair of abasic sites. The HMCES DNA-protein cross-link can also be degraded by the SPRTN metalloprotease following unfolding by the BRIP1/FANCJ helicase. Has preference for ssDNA, but can also accommodate double-stranded DNA with 3' or 5' overhang (dsDNA), and dsDNA-ssDNA 3' junction. Plays a protective role during somatic hypermutation of immunoglobulin genes in B-cells: acts via its ability to form covalent cross-links with abasic sites, thereby limiting the accumulation of deletions in somatic hypermutation target regions. Also involved in class switch recombination (CSR) in B-cells independently of the formation of a DNA-protein cross-link: acts by binding and protecting ssDNA overhangs to promote DNA double-strand break repair through the microhomology-mediated alternative-end-joining (Alt-EJ) pathway. Acts as a protease: mediates autocatalytic processing of its N-terminal methionine in order to expose the catalytic cysteine. The sequence is that of Abasic site processing protein HMCES from Pongo abelii (Sumatran orangutan).